The following is a 386-amino-acid chain: Histidinol-phosphate aminotransferase (386 aa).

Lysine 240 carries the N6-(pyridoxal phosphate)lysine modification.

The protein belongs to the class-II pyridoxal-phosphate-dependent aminotransferase family. Histidinol-phosphate aminotransferase subfamily. Homodimer. Pyridoxal 5'-phosphate is required as a cofactor.

It catalyses the reaction L-histidinol phosphate + 2-oxoglutarate = 3-(imidazol-4-yl)-2-oxopropyl phosphate + L-glutamate. The protein operates within amino-acid biosynthesis; L-histidine biosynthesis; L-histidine from 5-phospho-alpha-D-ribose 1-diphosphate: step 7/9. The polypeptide is Histidinol-phosphate aminotransferase (Bifidobacterium longum (strain NCC 2705)).